Here is an 88-residue protein sequence, read N- to C-terminus: Putative defensin-like protein 228 (88 aa).

The N-terminal stretch at 1-27 (MMKSAILLMVSCVFMFLVVSYIQDVEG) is a signal peptide. 4 cysteine pairs are disulfide-bonded: C32–C88, C42–C66, C50–C82, and C64–C84.

It belongs to the DEFL family.

The protein resides in the secreted. The polypeptide is Putative defensin-like protein 228 (SCRL3) (Arabidopsis thaliana (Mouse-ear cress)).